Reading from the N-terminus, the 184-residue chain is ATP synthase subunit b, chloroplastic (184 aa).

The chain crosses the membrane as a helical span at residues 27-49 (LATNPINLSVVLGVLIFFGKGVL).

The protein belongs to the ATPase B chain family. In terms of assembly, F-type ATPases have 2 components, F(1) - the catalytic core - and F(0) - the membrane proton channel. F(1) has five subunits: alpha(3), beta(3), gamma(1), delta(1), epsilon(1). F(0) has four main subunits: a(1), b(1), b'(1) and c(10-14). The alpha and beta chains form an alternating ring which encloses part of the gamma chain. F(1) is attached to F(0) by a central stalk formed by the gamma and epsilon chains, while a peripheral stalk is formed by the delta, b and b' chains.

The protein resides in the plastid. Its subcellular location is the chloroplast thylakoid membrane. Functionally, f(1)F(0) ATP synthase produces ATP from ADP in the presence of a proton or sodium gradient. F-type ATPases consist of two structural domains, F(1) containing the extramembraneous catalytic core and F(0) containing the membrane proton channel, linked together by a central stalk and a peripheral stalk. During catalysis, ATP synthesis in the catalytic domain of F(1) is coupled via a rotary mechanism of the central stalk subunits to proton translocation. In terms of biological role, component of the F(0) channel, it forms part of the peripheral stalk, linking F(1) to F(0). This Platanus occidentalis (Sycamore) protein is ATP synthase subunit b, chloroplastic.